Reading from the N-terminus, the 740-residue chain is Elongation factor 2 (740 aa).

The tr-type G domain occupies 23–264; sequence AQIRNAGTLA…MIIEHVPPPN (242 aa). GTP-binding positions include 32–39, 98–102, and 152–155; these read AHVDHGKT, DTPGH, and NKID. His-605 bears the Diphthamide mark.

The protein belongs to the TRAFAC class translation factor GTPase superfamily. Classic translation factor GTPase family. EF-G/EF-2 subfamily.

It localises to the cytoplasm. Functionally, catalyzes the GTP-dependent ribosomal translocation step during translation elongation. During this step, the ribosome changes from the pre-translocational (PRE) to the post-translocational (POST) state as the newly formed A-site-bound peptidyl-tRNA and P-site-bound deacylated tRNA move to the P and E sites, respectively. Catalyzes the coordinated movement of the two tRNA molecules, the mRNA and conformational changes in the ribosome. This Pyrobaculum islandicum (strain DSM 4184 / JCM 9189 / GEO3) protein is Elongation factor 2.